The following is a 506-amino-acid chain: Probable malate:quinone oxidoreductase (506 aa).

Belongs to the MQO family. FAD is required as a cofactor.

The catalysed reaction is (S)-malate + a quinone = a quinol + oxaloacetate. It functions in the pathway carbohydrate metabolism; tricarboxylic acid cycle; oxaloacetate from (S)-malate (quinone route): step 1/1. This is Probable malate:quinone oxidoreductase from Rhodococcus jostii (strain RHA1).